Reading from the N-terminus, the 349-residue chain is uncharacterized protein (349 aa).

A signal peptide spans 1–16; that stretch reads MLFKISFLALIASALA. Residues 17–326 are Lumenal-facing; that stretch reads MSINSPTNGD…SSSSSSSAAS (310 aa). 2 disordered regions span residues 115 to 190 and 243 to 322; these read ASSS…SSYR and TNGT…SSSS. Low complexity-rich tracts occupy residues 116 to 176, 243 to 278, and 289 to 322; these read SSSS…SSRT, TNGT…TASG, and STND…SSSS. A helical membrane pass occupies residues 327–347; sequence LVSQPVGISAVIAFFAVALSL. At 348–349 the chain is on the cytoplasmic side; that stretch reads TL.

Its subcellular location is the endoplasmic reticulum membrane. This is an uncharacterized protein from Schizosaccharomyces pombe (strain 972 / ATCC 24843) (Fission yeast).